A 361-amino-acid polypeptide reads, in one-letter code: 3-dehydroquinate synthase (361 aa).

Belongs to the archaeal-type DHQ synthase family.

The catalysed reaction is 2-amino-2,3,7-trideoxy-D-lyxo-hept-6-ulosonate + NAD(+) + H2O = 3-dehydroquinate + NH4(+) + NADH + H(+). Its function is as follows. Catalyzes the oxidative deamination and cyclization of 2-amino-3,7-dideoxy-D-threo-hept-6-ulosonic acid (ADH) to yield 3-dehydroquinate (DHQ), which is fed into the canonical shikimic pathway of aromatic amino acid biosynthesis. This chain is 3-dehydroquinate synthase, found in Methanococcus maripaludis (strain C5 / ATCC BAA-1333).